Consider the following 362-residue polypeptide: Peptide chain release factor 1 (362 aa).

N5-methylglutamine is present on Q237. The tract at residues 279–305 (RLQQAEDEKRRSEEESSRRNLVASGDR) is disordered. Over residues 282–296 (QAEDEKRRSEEESSR) the composition is skewed to basic and acidic residues.

Belongs to the prokaryotic/mitochondrial release factor family. Post-translationally, methylated by PrmC. Methylation increases the termination efficiency of RF1.

It localises to the cytoplasm. Peptide chain release factor 1 directs the termination of translation in response to the peptide chain termination codons UAG and UAA. The chain is Peptide chain release factor 1 from Colwellia psychrerythraea (strain 34H / ATCC BAA-681) (Vibrio psychroerythus).